We begin with the raw amino-acid sequence, 54 residues long: Large ribosomal subunit protein bL32c (54 aa).

The protein belongs to the bacterial ribosomal protein bL32 family.

It is found in the plastid. The protein resides in the chloroplast. The chain is Large ribosomal subunit protein bL32c from Piper cenocladum (Ant piper).